We begin with the raw amino-acid sequence, 340 residues long: MYRNWRDLISPKKLQVESETLTNKYGKFYAEPFERGFGTTLGNSLRRVLLSSLQGAGITSVRIKGVLHEFSSIPGVTEDVTNIILNLKGVSLKMYGTEPKTVRIIHKGDGIITAGDIITDPQVEILNPEHHIATCSKDANLEMEMVVKVGKGYVPADRNRDEKAPVGTIPIDALFSPIRKVNFTVSNARVGQMTDYDKLTLEVWTNGSVIPEDAVAFAAKILKEQLSIFINFDEEAEPSGEAEVGEGESPINENLYRSVDELELSVRSANCLKNAGIKLIGELVSRTEAEMLKTQNFGRKSLNEIKDILAEMGLTLGMKLEGFPDPEVMRRLRGERKDEE.

An alpha N-terminal domain (alpha-NTD) region spans residues 1–233; sequence MYRNWRDLIS…EQLSIFINFD (233 aa). Positions 251 to 340 are alpha C-terminal domain (alpha-CTD); sequence INENLYRSVD…RLRGERKDEE (90 aa).

The protein belongs to the RNA polymerase alpha chain family. Homodimer. The RNAP catalytic core consists of 2 alpha, 1 beta, 1 beta' and 1 omega subunit. When a sigma factor is associated with the core the holoenzyme is formed, which can initiate transcription.

The catalysed reaction is RNA(n) + a ribonucleoside 5'-triphosphate = RNA(n+1) + diphosphate. DNA-dependent RNA polymerase catalyzes the transcription of DNA into RNA using the four ribonucleoside triphosphates as substrates. This is DNA-directed RNA polymerase subunit alpha from Geobacter sulfurreducens (strain ATCC 51573 / DSM 12127 / PCA).